The chain runs to 282 residues: Succinate dehydrogenase [ubiquinone] iron-sulfur subunit, mitochondrial (282 aa).

The transit peptide at 1–26 (MAAVVFSLRRSGPVLRLSGALQVSRG) directs the protein to the mitochondrion. The 2Fe-2S ferredoxin-type domain maps to 42-135 (KKFAIYRWDP…VSKIYPLPHM (94 aa)). Cysteine 95, cysteine 100, cysteine 103, and cysteine 115 together coordinate [2Fe-2S] cluster. Residues 178–208 (DRDKLDGLYECILCACCSTSCPSYWWNADKY) enclose the 4Fe-4S ferredoxin-type domain. Cysteine 188, cysteine 191, and cysteine 194 together coordinate [4Fe-4S] cluster. [3Fe-4S] cluster is bound at residue cysteine 198. Tryptophan 203 is an a ubiquinone binding site. Cysteine 245 and cysteine 251 together coordinate [3Fe-4S] cluster. [4Fe-4S] cluster is bound at residue cysteine 255.

The protein belongs to the succinate dehydrogenase/fumarate reductase iron-sulfur protein family. In terms of assembly, component of complex II composed of four subunits: the flavoprotein (FP) sdha, iron-sulfur protein (IP) sdhb, and a cytochrome b composed of sdhc and sdhd. [2Fe-2S] cluster is required as a cofactor. [3Fe-4S] cluster serves as cofactor. It depends on [4Fe-4S] cluster as a cofactor.

It localises to the mitochondrion inner membrane. The catalysed reaction is a quinone + succinate = fumarate + a quinol. It catalyses the reaction (R)-malate + a quinone = enol-oxaloacetate + a quinol. The enzyme catalyses (S)-malate + a quinone = enol-oxaloacetate + a quinol. It functions in the pathway carbohydrate metabolism; tricarboxylic acid cycle; fumarate from succinate (eukaryal route): step 1/1. With respect to regulation, enol-oxaloacetate inhibits the succinate dehydrogenase activity. In terms of biological role, iron-sulfur protein (IP) subunit of the succinate dehydrogenase complex (mitochondrial respiratory chain complex II), responsible for transferring electrons from succinate to ubiquinone (coenzyme Q). SDH also oxidizes malate to the non-canonical enol form of oxaloacetate, enol-oxaloacetate. Enol-oxaloacetate, which is a potent inhibitor of the succinate dehydrogenase activity, is further isomerized into keto-oxaloacetate. In Xenopus laevis (African clawed frog), this protein is Succinate dehydrogenase [ubiquinone] iron-sulfur subunit, mitochondrial (sdhb).